The sequence spans 97 residues: Kunitz-type trypsin inhibitor 1 (97 aa).

The protein belongs to the protease inhibitor I3 (leguminous Kunitz-type inhibitor) family.

Its function is as follows. Exhibits Kunitz trypsin protease inhibitor activity. This Selenicereus costaricensis (Red-fleshed dragon fruit) protein is Kunitz-type trypsin inhibitor 1.